The chain runs to 261 residues: Thioesterase frbD (261 aa).

Belongs to the AMT4 thioesterase family.

The protein operates within antifungal biosynthesis. In terms of biological role, thioesterase; part of the gene cluster that mediates the biosynthesis of the antifungal antibiotic FR901469, an inhibitor of beta-1,3-glucansynthase, exerting antifungal activity against the pathogenes Candida albicans and Aspergillus fumigatus. FR901469 is a cyclic depsipeptide containing 12 amino acid residues and a fatty acid chain. The NRPS frbI contains 12 modules responsible for the formation of the depsipeptide backbone which is denoted as Acyl-Thr-Ala-Tyr-Val-4OHPro-Thr-Thr-3OHPro-threo3OHGln-Gly-Thr-Orn-OH (C71H116N14O23). The PKS frbB is probably involved in the production of the hydrocarbon chain, and the acyl-CoA ligase frbC might be involved in the transport of the chain to the peptide ptoduct of frbI. Because FR901469 contains 3 hydroxylated amino acid residues, the 3 oxygenases frbA, frbH, and frbJ might be participating in amino acid hydroxylation. As no thioesterase domains were detected in frbI or frbB, the thioesterases frbD and frbE may instead release and cyclize the products of the NRPS and PKS, respectively. The sequence is that of Thioesterase frbD from Dothideomycetidae sp. (strain 11243) (Fungal sp. (strain No.11243)).